Consider the following 112-residue polypeptide: T cell receptor alpha variable 12-1 (112 aa).

The N-terminal stretch at 1 to 20 (MISLRVLLVILWLQLSWVWS) is a signal peptide. The 90-residue stretch at 23-112 (KEVEQDPGPF…DSATYLCVVN (90 aa)) folds into the Ig-like domain. Residue Asn-43 is glycosylated (N-linked (GlcNAc...) asparagine). Cys-44 and Cys-109 are oxidised to a cystine.

In terms of assembly, alpha-beta TR is a heterodimer composed of an alpha and beta chain; disulfide-linked. The alpha-beta TR is associated with the transmembrane signaling CD3 coreceptor proteins to form the TR-CD3 (TcR or TCR). The assembly of alpha-beta TR heterodimers with CD3 occurs in the endoplasmic reticulum where a single alpha-beta TR heterodimer associates with one CD3D-CD3E heterodimer, one CD3G-CD3E heterodimer and one CD247 homodimer forming a stable octameric structure. CD3D-CD3E and CD3G-CD3E heterodimers preferentially associate with TR alpha and TR beta chains, respectively. The association of the CD247 homodimer is the last step of TcR assembly in the endoplasmic reticulum and is required for transport to the cell surface.

The protein resides in the cell membrane. In terms of biological role, v region of the variable domain of T cell receptor (TR) alpha chain that participates in the antigen recognition. Alpha-beta T cell receptors are antigen specific receptors which are essential to the immune response and are present on the cell surface of T lymphocytes. Recognize peptide-major histocompatibility (MH) (pMH) complexes that are displayed by antigen presenting cells (APC), a prerequisite for efficient T cell adaptive immunity against pathogens. Binding of alpha-beta TR to pMH complex initiates TR-CD3 clustering on the cell surface and intracellular activation of LCK that phosphorylates the ITAM motifs of CD3G, CD3D, CD3E and CD247 enabling the recruitment of ZAP70. In turn ZAP70 phosphorylates LAT, which recruits numerous signaling molecules to form the LAT signalosome. The LAT signalosome propagates signal branching to three major signaling pathways, the calcium, the mitogen-activated protein kinase (MAPK) kinase and the nuclear factor NF-kappa-B (NF-kB) pathways, leading to the mobilization of transcription factors that are critical for gene expression and essential for T cell growth and differentiation. The T cell repertoire is generated in the thymus, by V-(D)-J rearrangement. This repertoire is then shaped by intrathymic selection events to generate a peripheral T cell pool of self-MH restricted, non-autoaggressive T cells. Post-thymic interaction of alpha-beta TR with the pMH complexes shapes TR structural and functional avidity. The polypeptide is T cell receptor alpha variable 12-1 (Homo sapiens (Human)).